The primary structure comprises 359 residues: Small ribosomal subunit protein mS22 (359 aa).

The disordered stretch occupies residues 40–65 (RPQPFEVGQPRRLLSSEAESGSSEVK). Serine 54 carries the post-translational modification Phosphoserine. Lysine 210 is subject to N6-acetyllysine.

Belongs to the mitochondrion-specific ribosomal protein mS22 family. In terms of assembly, component of the mitochondrial ribosome small subunit (28S) which comprises a 12S rRNA and about 30 distinct proteins.

Its subcellular location is the mitochondrion. The polypeptide is Small ribosomal subunit protein mS22 (Mrps22) (Mus musculus (Mouse)).